A 421-amino-acid polypeptide reads, in one-letter code: Protein ECERIFERUM 2 (421 aa).

The residue at position 1 (Met-1) is an N-acetylmethionine.

This sequence belongs to the plant acyltransferase family. Expressed at high levels in the epidermis of stems and young siliques. Expressed in flowers.

It localises to the endoplasmic reticulum. The protein resides in the nucleus. Its function is as follows. Involved in biosynthesis of the epicuticular wax. Plays a role in very-long-chain fatty acid (VLCFA) biosynthesis and is required for C28 fatty acid elongation in stem. Despite its classification as a BAHD acyltransferase based on sequence homology, CER2 does not seem to share the catalytic mechanism of the members of the BAHD family. This chain is Protein ECERIFERUM 2 (CER2), found in Arabidopsis thaliana (Mouse-ear cress).